The following is a 242-amino-acid chain: Myogenic factor 6 (242 aa).

The disordered stretch occupies residues 30 to 63 (GSPLYPGSDGTLSPCQDQLPPEAGSDSSGEEHVL). One can recognise a bHLH domain in the interval 93 to 144 (DRRKAATLRERRRLKKINEAFEALKRRTVANPNQRLPKVEILRSAISYIERL). The interval 190–210 (ASDHSRALGGSPKAGGSMVES) is disordered.

Efficient DNA binding requires dimerization with another bHLH protein. Skeletal muscle.

The protein resides in the nucleus. In terms of biological role, involved in muscle differentiation (myogenic factor). Induces fibroblasts to differentiate into myoblasts. Probable sequence specific DNA-binding protein. This chain is Myogenic factor 6 (MYF6), found in Gallus gallus (Chicken).